Here is a 639-residue protein sequence, read N- to C-terminus: Protein artemis (639 aa).

Disordered stretches follow at residues 450–496, 515–570, and 590–617; these read MDCT…LTSS, SELE…SQVD, and EAAE…VPQP. Acidic residues predominate over residues 454-466; sequence ESNDDDDDEDDAA. The segment covering 518–537 has biased composition (polar residues); the sequence is ENSQNTQTLSTENTASQSPE. Low complexity predominate over residues 548-560; that stretch reads VHMSSSQSTHISD.

It belongs to the DNA repair metallo-beta-lactamase (DRMBL) family.

Its subcellular location is the nucleus. May have a role in the processing of DNA double strand breaks (DSBs) prior to their repair by the non homologous end joining (NHEJ) pathway. Probably exhibits both exonuclease and endonuclease activity. The sequence is that of Protein artemis (dclre1c) from Danio rerio (Zebrafish).